Here is a 286-residue protein sequence, read N- to C-terminus: Polyamine aminopropyltransferase 1 (286 aa).

Positions 1-235 (MSDYQETLYQ…GAMTFAWGST (235 aa)) constitute a PABS domain. Residue Gln-30 coordinates S-methyl-5'-thioadenosine. His-61 and Asp-85 together coordinate spermidine. S-methyl-5'-thioadenosine-binding positions include Glu-105 and 137–138 (DG). Residue Asp-155 is the Proton acceptor of the active site. Position 155–158 (155–158 (DSTD)) interacts with spermidine. Pro-162 serves as a coordination point for S-methyl-5'-thioadenosine.

This sequence belongs to the spermidine/spermine synthase family. Homodimer or homotetramer.

It is found in the cytoplasm. The catalysed reaction is S-adenosyl 3-(methylsulfanyl)propylamine + putrescine = S-methyl-5'-thioadenosine + spermidine + H(+). The protein operates within amine and polyamine biosynthesis; spermidine biosynthesis; spermidine from putrescine: step 1/1. Its function is as follows. Catalyzes the irreversible transfer of a propylamine group from the amino donor S-adenosylmethioninamine (decarboxy-AdoMet) to putrescine (1,4-diaminobutane) to yield spermidine. The protein is Polyamine aminopropyltransferase 1 of Pseudomonas aeruginosa (strain ATCC 15692 / DSM 22644 / CIP 104116 / JCM 14847 / LMG 12228 / 1C / PRS 101 / PAO1).